Here is a 188-residue protein sequence, read N- to C-terminus: Elongation factor P (188 aa).

The protein belongs to the elongation factor P family.

Its subcellular location is the cytoplasm. It participates in protein biosynthesis; polypeptide chain elongation. In terms of biological role, involved in peptide bond synthesis. Stimulates efficient translation and peptide-bond synthesis on native or reconstituted 70S ribosomes in vitro. Probably functions indirectly by altering the affinity of the ribosome for aminoacyl-tRNA, thus increasing their reactivity as acceptors for peptidyl transferase. The protein is Elongation factor P of Rickettsia akari (strain Hartford).